A 449-amino-acid polypeptide reads, in one-letter code: Bifunctional protein GlmU (449 aa).

The segment at 1–225 (MLSVAILAAG…NGELQGINNR (225 aa)) is pyrophosphorylase. Residues 7–10 (LAAG), Lys-21, Gln-73, and 78–79 (GT) each bind UDP-N-acetyl-alpha-D-glucosamine. Asp-103 contributes to the Mg(2+) binding site. UDP-N-acetyl-alpha-D-glucosamine contacts are provided by Gly-140, Glu-154, Asn-169, and Asn-223. Asn-223 provides a ligand contact to Mg(2+). A linker region spans residues 226–246 (IQLSKCEEIIQNSIKEKHMLN). The segment at 247-449 (GVTFINQASC…NIDNWERKKP (203 aa)) is N-acetyltransferase. UDP-N-acetyl-alpha-D-glucosamine is bound by residues Arg-328 and Lys-346. Residue His-358 is the Proton acceptor of the active site. UDP-N-acetyl-alpha-D-glucosamine is bound by residues Tyr-361 and Asn-372. Residues Ala-375, Ala-418, and Arg-435 each contribute to the acetyl-CoA site.

The protein in the N-terminal section; belongs to the N-acetylglucosamine-1-phosphate uridyltransferase family. It in the C-terminal section; belongs to the transferase hexapeptide repeat family. In terms of assembly, homotrimer. The cofactor is Mg(2+).

Its subcellular location is the cytoplasm. It carries out the reaction alpha-D-glucosamine 1-phosphate + acetyl-CoA = N-acetyl-alpha-D-glucosamine 1-phosphate + CoA + H(+). It catalyses the reaction N-acetyl-alpha-D-glucosamine 1-phosphate + UTP + H(+) = UDP-N-acetyl-alpha-D-glucosamine + diphosphate. It functions in the pathway nucleotide-sugar biosynthesis; UDP-N-acetyl-alpha-D-glucosamine biosynthesis; N-acetyl-alpha-D-glucosamine 1-phosphate from alpha-D-glucosamine 6-phosphate (route II): step 2/2. Its pathway is nucleotide-sugar biosynthesis; UDP-N-acetyl-alpha-D-glucosamine biosynthesis; UDP-N-acetyl-alpha-D-glucosamine from N-acetyl-alpha-D-glucosamine 1-phosphate: step 1/1. It participates in bacterial outer membrane biogenesis; LPS lipid A biosynthesis. Catalyzes the last two sequential reactions in the de novo biosynthetic pathway for UDP-N-acetylglucosamine (UDP-GlcNAc). The C-terminal domain catalyzes the transfer of acetyl group from acetyl coenzyme A to glucosamine-1-phosphate (GlcN-1-P) to produce N-acetylglucosamine-1-phosphate (GlcNAc-1-P), which is converted into UDP-GlcNAc by the transfer of uridine 5-monophosphate (from uridine 5-triphosphate), a reaction catalyzed by the N-terminal domain. This is Bifunctional protein GlmU from Prochlorococcus marinus (strain MIT 9312).